Consider the following 271-residue polypeptide: Formamidopyrimidine-DNA glycosylase (271 aa).

P2 acts as the Schiff-base intermediate with DNA in catalysis. The active-site Proton donor is the E3. K57 acts as the Proton donor; for beta-elimination activity in catalysis. Positions 90, 109, and 150 each coordinate DNA. The FPG-type zinc finger occupies 235–269 (LVYGNKDKPCPKCGGKIESLIIGQRNSFFCPKCQK). The active-site Proton donor; for delta-elimination activity is R259.

This sequence belongs to the FPG family. In terms of assembly, monomer. The cofactor is Zn(2+).

It catalyses the reaction Hydrolysis of DNA containing ring-opened 7-methylguanine residues, releasing 2,6-diamino-4-hydroxy-5-(N-methyl)formamidopyrimidine.. It carries out the reaction 2'-deoxyribonucleotide-(2'-deoxyribose 5'-phosphate)-2'-deoxyribonucleotide-DNA = a 3'-end 2'-deoxyribonucleotide-(2,3-dehydro-2,3-deoxyribose 5'-phosphate)-DNA + a 5'-end 5'-phospho-2'-deoxyribonucleoside-DNA + H(+). Its function is as follows. Involved in base excision repair of DNA damaged by oxidation or by mutagenic agents. Acts as a DNA glycosylase that recognizes and removes damaged bases. Has a preference for oxidized purines, such as 7,8-dihydro-8-oxoguanine (8-oxoG). Has AP (apurinic/apyrimidinic) lyase activity and introduces nicks in the DNA strand. Cleaves the DNA backbone by beta-delta elimination to generate a single-strand break at the site of the removed base with both 3'- and 5'-phosphates. The protein is Formamidopyrimidine-DNA glycosylase of Haemophilus influenzae (strain 86-028NP).